A 396-amino-acid chain; its full sequence is Inositol polyphosphate multikinase (396 aa).

A compositionally biased stretch (low complexity) spans 1-13 (MAAEPPALRLRPP). Residues 1 to 22 (MAAEPPALRLRPPGSTGDSPPV) are disordered. A2 carries the post-translational modification N-acetylalanine. S19 carries the post-translational modification Phosphoserine. ATP is bound at residue K58. R65 contributes to the substrate binding site. ATP contacts are provided by residues 114-116 (EDV) and D127. Substrate is bound by residues K129, 143–150 (KIQQQVSK), and Q179. A Nuclear localization signal motif is present at residues 300–310 (RHRKLYAKKHQ). ATP is bound at residue D365.

This sequence belongs to the inositol phosphokinase (IPK) family. Requires Mg(2+) as cofactor.

The protein localises to the nucleus. The enzyme catalyses 1D-myo-inositol 1,4,5-trisphosphate + 2 ATP = 1D-myo-inositol 1,3,4,5,6-pentakisphosphate + 2 ADP + 2 H(+). It carries out the reaction 1D-myo-inositol 1,3,4,6-tetrakisphosphate + ATP = 1D-myo-inositol 1,3,4,5,6-pentakisphosphate + ADP + H(+). It catalyses the reaction 1-octadecanoyl-2-(5Z,8Z,11Z,14Z)-eicosatetraenoyl-sn-glycero-3-phospho-1D-myo-inositol 4,5-bisphosphate + ATP = 1-octadecanoyl-2-(5Z,8Z,11Z,14Z-eicosatetraenoyl)-sn-glycero-3-phospho-(1D-myo-inositol 3,4,5-triphosphate) + ADP + H(+). The catalysed reaction is a 1,2-diacyl-sn-glycero-3-phospho-(1D-myo-inositol-4,5-bisphosphate) + ATP = a 1,2-diacyl-sn-glycero-3-phospho-(1D-myo-inositol-3,4,5-trisphosphate) + ADP + H(+). The enzyme catalyses 1D-myo-inositol 1,4,5,6-tetrakisphosphate + ATP = 1D-myo-inositol 1,3,4,5,6-pentakisphosphate + ADP + H(+). Its pathway is phospholipid metabolism; phosphatidylinositol metabolism. In terms of biological role, inositol phosphate kinase with a broad substrate specificity. Phosphorylates inositol 1,4,5-trisphosphate (Ins(1,4,5)P3) first to inositol 1,3,4,5-tetrakisphosphate and then to inositol 1,3,4,5,6-pentakisphosphate (Ins(1,3,4,5,6)P5). Phosphorylates inositol 1,3,4,6-tetrakisphosphate (Ins(1,3,4,6)P4). Phosphorylates inositol 1,4,5,6-tetrakisphosphate (Ins(1,4,5,6)P4). Phosphorylates glycero-3-phospho-1D-myo-inositol 4,5-bisphosphate to glycero-3-phospho-1D-myo-inositol 3,4,5-trisphosphate. Plays an important role in MLKL-mediated necroptosis via its role in the biosynthesis of inositol pentakisphosphate (InsP5) and inositol hexakisphosphate (InsP6). Binding of these highly phosphorylated inositol phosphates to MLKL mediates the release of an N-terminal auto-inhibitory region, leading to activation of the kinase. Essential for activated phospho-MLKL to oligomerize and localize to the cell membrane during necroptosis. Required for normal embryonic development, probably via its role in the biosynthesis of inositol 1,3,4,5,6-pentakisphosphate (Ins(1,3,4,5,6)P5) and inositol hexakisphosphate (InsP6). In Mus musculus (Mouse), this protein is Inositol polyphosphate multikinase (Ipmk).